Reading from the N-terminus, the 335-residue chain is Calcium/calmodulin-dependent protein kinase type I (335 aa).

The Protein kinase domain occupies 31 to 291; it reads YRVGRVLGGG…AADALKHPFL (261 aa). Position 37 to 45 (37 to 45) interacts with ATP; that stretch reads LGGGTYATV. Residue Asp-154 is the Proton acceptor of the active site. Position 192 is a phosphothreonine; by autocatalysis (Thr-192). The segment at 310–334 is calmodulin-binding; the sequence is NARKTFRTAYNAVRAFNTWKKLENK.

Belongs to the protein kinase superfamily. CAMK Ser/Thr protein kinase family. CaMK subfamily.

The protein localises to the cytoplasm. The enzyme catalyses L-seryl-[protein] + ATP = O-phospho-L-seryl-[protein] + ADP + H(+). The catalysed reaction is L-threonyl-[protein] + ATP = O-phospho-L-threonyl-[protein] + ADP + H(+). Functionally, important in cell cycle regulation. In Schizosaccharomyces pombe (strain 972 / ATCC 24843) (Fission yeast), this protein is Calcium/calmodulin-dependent protein kinase type I (cmk1).